A 64-amino-acid chain; its full sequence is Large ribosomal subunit protein uL29 (64 aa).

The protein belongs to the universal ribosomal protein uL29 family.

The sequence is that of Large ribosomal subunit protein uL29 from Solidesulfovibrio magneticus (strain ATCC 700980 / DSM 13731 / RS-1) (Desulfovibrio magneticus).